Consider the following 602-residue polypeptide: Chaperone protein DnaK (602 aa).

Thr-199 bears the Phosphothreonine; by autocatalysis mark.

The protein belongs to the heat shock protein 70 family.

Its function is as follows. Acts as a chaperone. In Carsonella ruddii (strain PV), this protein is Chaperone protein DnaK.